A 92-amino-acid polypeptide reads, in one-letter code: Small ribosomal subunit protein bS20 (92 aa).

The interval 1–24 is disordered; the sequence is MANTTSAKKATRKIARRTDVNKAR.

This sequence belongs to the bacterial ribosomal protein bS20 family.

Binds directly to 16S ribosomal RNA. This is Small ribosomal subunit protein bS20 from Rhizobium etli (strain ATCC 51251 / DSM 11541 / JCM 21823 / NBRC 15573 / CFN 42).